A 217-amino-acid polypeptide reads, in one-letter code: Probable transaldolase (217 aa).

Lys83 (schiff-base intermediate with substrate) is an active-site residue.

This sequence belongs to the transaldolase family. Type 3B subfamily.

The protein resides in the cytoplasm. It catalyses the reaction D-sedoheptulose 7-phosphate + D-glyceraldehyde 3-phosphate = D-erythrose 4-phosphate + beta-D-fructose 6-phosphate. It functions in the pathway carbohydrate degradation; pentose phosphate pathway; D-glyceraldehyde 3-phosphate and beta-D-fructose 6-phosphate from D-ribose 5-phosphate and D-xylulose 5-phosphate (non-oxidative stage): step 2/3. Functionally, transaldolase is important for the balance of metabolites in the pentose-phosphate pathway. The polypeptide is Probable transaldolase (Rhizorhabdus wittichii (strain DSM 6014 / CCUG 31198 / JCM 15750 / NBRC 105917 / EY 4224 / RW1) (Sphingomonas wittichii)).